The chain runs to 205 residues: MIGRLRGTLAEKQPPHLIIDVNGVGYELEVPMTTLYRLPKVGETVTVHTHLVVREDAHLLYGFAEKRERELFRELIRLNGVGPKLALALMSGLEVDELVRCVQAQDTSALVRVPGVGKKTAERLLVELKDRFKAWETSPAMFTLVSDGPLPVASESSAEADAVSALVSLGYKPQEASKAIAAIKDKAGLSSEELIRRSLKGMISK.

Residues Met1 to Ala64 form a domain I region. The interval Glu65–Thr143 is domain II. A flexible linker region spans residues Leu144–Ser154. The interval Ser154 to Lys205 is domain III.

It belongs to the RuvA family. Homotetramer. Forms an RuvA(8)-RuvB(12)-Holliday junction (HJ) complex. HJ DNA is sandwiched between 2 RuvA tetramers; dsDNA enters through RuvA and exits via RuvB. An RuvB hexamer assembles on each DNA strand where it exits the tetramer. Each RuvB hexamer is contacted by two RuvA subunits (via domain III) on 2 adjacent RuvB subunits; this complex drives branch migration. In the full resolvosome a probable DNA-RuvA(4)-RuvB(12)-RuvC(2) complex forms which resolves the HJ.

It localises to the cytoplasm. Functionally, the RuvA-RuvB-RuvC complex processes Holliday junction (HJ) DNA during genetic recombination and DNA repair, while the RuvA-RuvB complex plays an important role in the rescue of blocked DNA replication forks via replication fork reversal (RFR). RuvA specifically binds to HJ cruciform DNA, conferring on it an open structure. The RuvB hexamer acts as an ATP-dependent pump, pulling dsDNA into and through the RuvAB complex. HJ branch migration allows RuvC to scan DNA until it finds its consensus sequence, where it cleaves and resolves the cruciform DNA. This Pseudomonas putida (strain ATCC 47054 / DSM 6125 / CFBP 8728 / NCIMB 11950 / KT2440) protein is Holliday junction branch migration complex subunit RuvA.